A 78-amino-acid polypeptide reads, in one-letter code: UPF0349 protein SSP1836 (78 aa).

Belongs to the UPF0349 family.

The protein is UPF0349 protein SSP1836 of Staphylococcus saprophyticus subsp. saprophyticus (strain ATCC 15305 / DSM 20229 / NCIMB 8711 / NCTC 7292 / S-41).